Here is an 828-residue protein sequence, read N- to C-terminus: MKLSRRSFMKANAVAAAAAAAGLSVPGVARAVVGQQEAIKWDKAPCRFCGTGCGVLVGTQQGRVVACQGDPDAPVNRGLNCIKGYFLPKIMYGKDRLTQPLLRMKNGKYDKEGEFTPITWDQAFDVMEDKFKTALKEKGPESIGMFGSGQWTIWEGYAASKLFKAGFRSNNIDPNARHCMASAVVGFMRTFGMDEPMGCYDDIEQADAFVLWGSNMAEMHPILWSRITNRRLSNQNVTVAVLSTYQHRSFELADNGIIFTPQSDLVILNYIANYIIQNNAINQDFFSKHVNLRKGATDIGYGLRPTHPLEKAAKNPGSDASEPMSFEDYKAFVAEYTLEKTAEMTGVPKDQLEQLAQLYADPNKKVISYWTMGFNQHTRGVWANNLVYNLHLLTGKISQPGCGPFSLTGQPSACGTAREVGTFAHRLPADMVVTNEKHRDICEKKWNIPSGTIPAKIGLHAVAQDRALKDGKLNVYWTMCTNNMQAGPNINEERMPGWRDPRNFIIVSDPYPTVSALAADLILPTAMWVEKEGAYGNAERRTQFWRQQVQAPGEAKSDLWQLVQFSRRFKTEEVWPEELLAKKPELRGKTLYEVLYATPEVSKFPVSELAEDQLNDESRELGFYLQKGLFEEYAWFGRGHGHDLAPFDDYHKARGLRWPVVNGKETQWRYSEGNDPYVKAGEGYKFYGKPDGKAVIFALPFEPAAEAPDEEYDLWLSTGRVLEHWHTGSMTRRVPELHRAFPEAVLFIHPLDAKARDLRRGDKVKVVSRRGEVISIVETRGRNRPPQGLVYMPFFDAAQLVNKLTLDATDPLSKETDFKKCAVKLEKV.

The tat-type signal signal peptide spans 1–31 (MKLSRRSFMKANAVAAAAAAAGLSVPGVARA). Residues 39-95 (IKWDKAPCRFCGTGCGVLVGTQQGRVVACQGDPDAPVNRGLNCIKGYFLPKIMYGKD) form the 4Fe-4S Mo/W bis-MGD-type domain. Residues cysteine 46, cysteine 49, cysteine 53, and cysteine 81 each contribute to the [4Fe-4S] cluster site. Mo-bis(molybdopterin guanine dinucleotide)-binding positions include lysine 83, glutamine 150, asparagine 175, cysteine 179, 212 to 219 (WGSNMAEM), 243 to 247 (STYQH), 262 to 264 (QSD), methionine 372, glutamine 376, asparagine 482, 508 to 509 (SD), lysine 531, aspartate 558, and 718 to 727 (TGRVLEHWHT). Phenylalanine 794 serves as a coordination point for substrate. Residues asparagine 802 and lysine 819 each contribute to the Mo-bis(molybdopterin guanine dinucleotide) site.

It belongs to the prokaryotic molybdopterin-containing oxidoreductase family. NasA/NapA/NarB subfamily. As to quaternary structure, component of the periplasmic nitrate reductase NapAB complex composed of NapA and NapB. It depends on [4Fe-4S] cluster as a cofactor. Requires Mo-bis(molybdopterin guanine dinucleotide) as cofactor. In terms of processing, predicted to be exported by the Tat system. The position of the signal peptide cleavage has not been experimentally proven.

It is found in the periplasm. The enzyme catalyses 2 Fe(II)-[cytochrome] + nitrate + 2 H(+) = 2 Fe(III)-[cytochrome] + nitrite + H2O. Catalytic subunit of the periplasmic nitrate reductase complex NapAB. Receives electrons from NapB and catalyzes the reduction of nitrate to nitrite. The polypeptide is Periplasmic nitrate reductase (Escherichia coli O1:K1 / APEC).